Here is a 197-residue protein sequence, read N- to C-terminus: Small ribosomal subunit protein uS4 (197 aa).

The S4 RNA-binding domain occupies 88–150; it reads SRLDNLVYRM…AKSLEIILDN (63 aa).

The protein belongs to the universal ribosomal protein uS4 family. In terms of assembly, part of the 30S ribosomal subunit. Contacts protein S5. The interaction surface between S4 and S5 is involved in control of translational fidelity.

Functionally, one of the primary rRNA binding proteins, it binds directly to 16S rRNA where it nucleates assembly of the body of the 30S subunit. In terms of biological role, with S5 and S12 plays an important role in translational accuracy. In Azobacteroides pseudotrichonymphae genomovar. CFP2, this protein is Small ribosomal subunit protein uS4.